A 102-amino-acid chain; its full sequence is MNGQNIRIRLKAFDHRILDSSTREIVSTAKRTGAQVRGPIPLPTRIERFTVNRSPHIDKKSREQFEMRTHKRVLDIVDPTPQTVDALMKLDLAAGVDVEIKL.

This sequence belongs to the universal ribosomal protein uS10 family. In terms of assembly, part of the 30S ribosomal subunit.

Involved in the binding of tRNA to the ribosomes. The sequence is that of Small ribosomal subunit protein uS10 from Methylobacterium nodulans (strain LMG 21967 / CNCM I-2342 / ORS 2060).